The primary structure comprises 105 residues: Large ribosomal subunit protein uL24 (105 aa).

This sequence belongs to the universal ribosomal protein uL24 family. As to quaternary structure, part of the 50S ribosomal subunit.

Functionally, one of two assembly initiator proteins, it binds directly to the 5'-end of the 23S rRNA, where it nucleates assembly of the 50S subunit. One of the proteins that surrounds the polypeptide exit tunnel on the outside of the subunit. This chain is Large ribosomal subunit protein uL24, found in Thioalkalivibrio sulfidiphilus (strain HL-EbGR7).